The primary structure comprises 498 residues: Succinate-semialdehyde dehydrogenase [NADP(+)] 1 (498 aa).

NAD(+) is bound at residue glycine 247 to glycine 252. Active-site residues include glutamate 269 and cysteine 303.

The protein belongs to the aldehyde dehydrogenase family. In terms of assembly, homotetramer.

The protein resides in the cytoplasm. The enzyme catalyses succinate semialdehyde + NAD(+) + H2O = succinate + NADH + 2 H(+). The catalysed reaction is succinate semialdehyde + NADP(+) + H2O = succinate + NADPH + 2 H(+). It participates in amino-acid degradation; 4-aminobutanoate degradation. In terms of biological role, catalyzes the oxidation of succinate semialdehyde to succinate. Can utilize both NAD(+) or NADP(+) as a coenzyme. Functions in a gamma-aminobutyrate (GABA) degradation pathway that allows growth utilizing GABA as a nitrogen source. Functions in the GABA shunt, which allows to bypass 2 reactions in the TCA cycle by removing alpha-ketoglutarate from the cycle and feeding succinate and NADH back into the cycle. The chain is Succinate-semialdehyde dehydrogenase [NADP(+)] 1 (ssd1) from Schizosaccharomyces pombe (strain 972 / ATCC 24843) (Fission yeast).